The following is a 461-amino-acid chain: ADP-specific phosphofructokinase (461 aa).

In terms of domain architecture, ADPK spans 1-457; sequence MVRELLEKAR…FASYLAMLKE (457 aa). 3 residues coordinate Mg(2+): Glu268, Glu298, and Asp441. Asp441 (proton acceptor) is an active-site residue.

It belongs to the carbohydrate kinase PfkC family. Mg(2+) is required as a cofactor.

It is found in the cytoplasm. The enzyme catalyses beta-D-fructose 6-phosphate + ADP = beta-D-fructose 1,6-bisphosphate + AMP + H(+). Its pathway is carbohydrate degradation; glycolysis. Functionally, catalyzes the phosphorylation of fructose 6-phosphate to fructose 1,6-bisphosphate using ADP as the phosphate donor. In Thermococcus zilligii, this protein is ADP-specific phosphofructokinase.